The sequence spans 423 residues: Histidine--tRNA ligase (423 aa).

The protein belongs to the class-II aminoacyl-tRNA synthetase family. Homodimer.

It localises to the cytoplasm. It catalyses the reaction tRNA(His) + L-histidine + ATP = L-histidyl-tRNA(His) + AMP + diphosphate + H(+). In Haemophilus influenzae (strain PittEE), this protein is Histidine--tRNA ligase.